The primary structure comprises 499 residues: Cytochrome P450 77A1 (499 aa).

C443 is a binding site for heme.

This sequence belongs to the cytochrome P450 family. Requires heme as cofactor.

This is Cytochrome P450 77A1 (CYP77A1) from Solanum melongena (Eggplant).